A 342-amino-acid chain; its full sequence is Transcriptional regulator of the unfolded protein response hacA (342 aa).

Residues 1-105 (MEDNFASVVE…TSRERKRLEM (105 aa)) are disordered. 2 stretches are compositionally biased toward basic and acidic residues: residues 35–48 (PETK…EEKK) and 74–88 (KTED…ERVL). The bZIP domain occupies 80–143 (EQRRIERVLR…NRLSQQLAQL (64 aa)). The tract at residues 82–135 (RRIERVLRNRAAAQTSRERKRLEMEKLENEKIQMEQQNQFLLQRLSQMEAENNR) is basic motif. The segment at 136-143 (LSQQLAQL) is leucine-zipper. Disordered stretches follow at residues 146–167 (EVRN…SPTL) and 306–330 (EPAH…GAST). Residues 315-330 (TPYQTSGLQPSLGAST) show a composition bias toward polar residues.

It belongs to the bZIP family.

The protein resides in the nucleus. In terms of biological role, master transcriptional regulator of the unfolded protein response (UPR) that recognizes and binds to the UPR element (UPRE) in the promoter of UPR-regulated genes. In the canonical UPR pathway, the ireA RNase splices the cytoplasmic mRNA hacA, which alters the reading frame to allow translation of the bZIP transcription factor hacA. Induces the expression of pmrA, scrA and spfA in response to UPR. This chain is Transcriptional regulator of the unfolded protein response hacA, found in Aspergillus fumigatus (strain ATCC MYA-4609 / CBS 101355 / FGSC A1100 / Af293) (Neosartorya fumigata).